A 490-amino-acid chain; its full sequence is MVPVIALVGRPNVGKSTMFNRLTRTRDAIVGDLSGLTRDRQYGEAKWQGRSYILIDTGGISGDEHGMDEKMAEQSLLAIEEADVVLFLVDARAGYTAADQMIGEHLRKRNKRSYVVANKIDNIDENLARAEFSPMGLGDAIPVAGAHGRGISQMLEIALREFPKDEDELEEGEEVEEVAEGQEAKRIPGPSEKDGIKIAIIGRPNVGKSTLVNRMLGEDRVIVYDEPGTTRDSIYIPFERNEEKYTLIDTAGVRKRGKIHEEVEKFSVVKTLQAIKDANVVIFVMDAREGVVDHDLNLLGFALEAGRALVIALNKWDGMTPGERDFVKIELERRLFFVDFADIHFISAMHGTGVGNLYQSVQNSFKSAVTRWPTSRLTQILEDAVSEHAPPMVGSRRIKLRYAHLGGANPPLIVIHGNQVEKVPKSYVRYLENTYRRVLKLVGTPIRIEFKGGENPYEGNKNTLTDRQVNKKRRMMSHHKKADKKRRDKR.

EngA-type G domains follow at residues 3-166 and 196-369; these read PVIA…PKDE and IKIA…KSAV. Residues 9–16, 56–60, 118–121, 202–209, 249–253, and 314–317 contribute to the GTP site; these read GRPNVGKS, DTGGI, NKID, DTAGV, and NKWD. The 85-residue stretch at 370–454 folds into the KH-like domain; sequence TRWPTSRLTQ…PIRIEFKGGE (85 aa). A disordered region spans residues 452 to 490; it reads GGENPYEGNKNTLTDRQVNKKRRMMSHHKKADKKRRDKR. A compositionally biased stretch (basic residues) spans 470-490; that stretch reads NKKRRMMSHHKKADKKRRDKR.

It belongs to the TRAFAC class TrmE-Era-EngA-EngB-Septin-like GTPase superfamily. EngA (Der) GTPase family. In terms of assembly, associates with the 50S ribosomal subunit.

Functionally, GTPase that plays an essential role in the late steps of ribosome biogenesis. This chain is GTPase Der, found in Pseudomonas savastanoi pv. phaseolicola (strain 1448A / Race 6) (Pseudomonas syringae pv. phaseolicola (strain 1448A / Race 6)).